The chain runs to 965 residues: Aminopeptidase N (965 aa).

At 2–8 (AKGFYIS) the chain is on the cytoplasmic side. Residues 9-32 (KTLGILGILLGVAAVCTIIALSVV) traverse the membrane as a helical; Signal-anchor for type II membrane protein segment. The segment at 33-68 (YAQEKNRNAENSAIAPTLPGSTSATTSTTNPAIDES) is cytosolic Ser/Thr-rich junction. Over 33-965 (YAQEKNRNAE…VVLKWFTENS (933 aa)) the chain is Extracellular. Residues 44–68 (SAIAPTLPGSTSATTSTTNPAIDES) form a disordered region. Residues 47–64 (APTLPGSTSATTSTTNPA) are compositionally biased toward low complexity. A metalloprotease region spans residues 69–965 (KPWNQYRLPK…VVLKWFTENS (897 aa)). Residues N114 and N128 are each glycosylated (N-linked (GlcNAc...) asparagine). Residue Y176 is modified to Sulfotyrosine. N234, N242, and N264 each carry an N-linked (GlcNAc...) asparagine glycan. 351–355 (GAMEN) contributes to the substrate binding site. H387 contributes to the Zn(2+) binding site. E388 (proton acceptor) is an active-site residue. Zn(2+) contacts are provided by H391 and E410. 3 N-linked (GlcNAc...) asparagine glycosylation sites follow: N555, N606, and N624. C760 and C767 are joined by a disulfide. N780 carries N-linked (GlcNAc...) asparagine glycosylation. Cysteines 797 and 833 form a disulfide. Residue Y852 is modified to Phosphotyrosine.

It belongs to the peptidase M1 family. Homodimer. Interacts with SLC6A19. The cofactor is Zn(2+). Sulfated. In terms of processing, N- and O-glycosylated. Post-translationally, may undergo proteolysis and give rise to a soluble form. As to expression, widely distributed throughout the CNS. Particularly abundant in kidney and intestinal microvilli, also detected in lung and liver. Weakly expressed in heart and aorta.

It is found in the cell membrane. It catalyses the reaction Release of an N-terminal amino acid, Xaa-|-Yaa- from a peptide, amide or arylamide. Xaa is preferably Ala, but may be most amino acids including Pro (slow action). When a terminal hydrophobic residue is followed by a prolyl residue, the two may be released as an intact Xaa-Pro dipeptide.. Broad specificity aminopeptidase which plays a role in the final digestion of peptides generated from hydrolysis of proteins by gastric and pancreatic proteases. Also involved in the processing of various peptides including peptide hormones, such as angiotensin III and IV, neuropeptides, and chemokines. May also be involved the cleavage of peptides bound to major histocompatibility complex class II molecules of antigen presenting cells. May have a role in angiogenesis and promote cholesterol crystallization. May have a role in amino acid transport by acting as binding partner of amino acid transporter SLC6A19 and regulating its activity. The chain is Aminopeptidase N (Anpep) from Rattus norvegicus (Rat).